The sequence spans 388 residues: Basigin (388 aa).

The signal sequence occupies residues 1-21 (MAAGADVPCAVLALLVLGSLA). The Extracellular segment spans residues 27-323 (TAGFIKSPLS…SGSATVNLRV (297 aa)). The 89-residue stretch at 43-131 (DSVELHCEAV…NHLSKSPKVK (89 aa)) folds into the Ig-like domain. 2 disulfide bridges follow: Cys-49–Cys-113 and Cys-162–Cys-211. The Ig-like C2-type domain maps to 143 to 218 (ERPVITGQYS…YECIYNTNPV (76 aa)). N-linked (GlcNAc...) asparagine glycosylation is found at Asn-163, Asn-222, Asn-280, Asn-286, and Asn-307. One can recognise an Ig-like V-type domain in the interval 229–323 (PQVVAYKKSE…SGSATVNLRV (95 aa)). A disulfide bridge links Cys-250 with Cys-306. Residues 324 to 344 (RSRLAALWPFLGIVAEVLVLV) form a helical membrane-spanning segment. At 345–388 (TIIFIYEKRRKPDEVLDDDDGGSAPLKSNATNHKDKNVRQRNAN) the chain is on the cytoplasmic side. Residues 358 to 388 (EVLDDDDGGSAPLKSNATNHKDKNVRQRNAN) are disordered.

As to quaternary structure, interacts with NXNL1, SLC2A1 and SLC16A1. In terms of processing, N-glycosylated. In terms of tissue distribution, retinal cone photoreceptors (at protein level). As to expression, brain endothelial cells, kidney epithelial cells and erythroblasts (at protein level).

It localises to the cell membrane. Its subcellular location is the photoreceptor inner segment. The protein localises to the cell projection. The protein resides in the cilium. It is found in the photoreceptor outer segment. It localises to the endoplasmic reticulum membrane. Its subcellular location is the basolateral cell membrane. In terms of biological role, essential for normal retinal maturation and development. Acts as a retinal cell surface receptor for NXNL1 and plays an important role in NXNL1-mediated survival of retinal cone photoreceptors. In association with glucose transporter SLC16A1/GLUT1 and NXNL1, promotes retinal cone survival by enhancing aerobic glycolysis and accelerating the entry of glucose into photoreceptors. Its function is as follows. Signaling receptor for cyclophilins, essential for PPIA/CYPA and PPIB/CYPB-dependent signaling related to chemotaxis and adhesion of immune cells. Plays an important role in targeting the monocarboxylate transporters SLC16A1/GLUT1, SLC16A3, SLC16A8, SLC16A11 and SLC16A12 to the plasma membrane. Acts as a coreceptor for vascular endothelial growth factor receptor 2 (KDR/VEGFR2) in endothelial cells enhancing its VEGFA-mediated activation and downstream signaling. Promotes angiogenesis through EPAS1/HIF2A-mediated up-regulation of VEGFA and KDR/VEGFR2 in endothelial cells. The chain is Basigin (BSG) from Gallus gallus (Chicken).